The primary structure comprises 150 residues: Nucleoside diphosphate kinase (150 aa).

ATP is bound by residues Lys10, Phe58, Arg86, Thr92, Arg103, and Asn113. His116 acts as the Pros-phosphohistidine intermediate in catalysis.

Belongs to the NDK family. Mg(2+) is required as a cofactor.

Its subcellular location is the cytoplasm. The enzyme catalyses a 2'-deoxyribonucleoside 5'-diphosphate + ATP = a 2'-deoxyribonucleoside 5'-triphosphate + ADP. The catalysed reaction is a ribonucleoside 5'-diphosphate + ATP = a ribonucleoside 5'-triphosphate + ADP. Its function is as follows. Major role in the synthesis of nucleoside triphosphates other than ATP. The ATP gamma phosphate is transferred to the NDP beta phosphate via a ping-pong mechanism, using a phosphorylated active-site intermediate. The chain is Nucleoside diphosphate kinase from Methanobrevibacter smithii (strain ATCC 35061 / DSM 861 / OCM 144 / PS).